The sequence spans 250 residues: Peptidyl-tRNA hydrolase (250 aa).

Tyrosine 14 is a binding site for tRNA. Histidine 19 serves as the catalytic Proton acceptor. Phenylalanine 64, asparagine 66, and asparagine 112 together coordinate tRNA. The tract at residues 192 to 250 (MGDGNQRPGGVKTDPAQLEKAPPKAQSHIRQARQNQKKPNIPESGPMAEMLKKLLGKKD) is disordered. The segment covering 219–229 (HIRQARQNQKK) has biased composition (polar residues). Residues 241–250 (MLKKLLGKKD) are compositionally biased toward basic and acidic residues.

This sequence belongs to the PTH family. Monomer.

The protein resides in the cytoplasm. It carries out the reaction an N-acyl-L-alpha-aminoacyl-tRNA + H2O = an N-acyl-L-amino acid + a tRNA + H(+). Its function is as follows. Hydrolyzes ribosome-free peptidyl-tRNAs (with 1 or more amino acids incorporated), which drop off the ribosome during protein synthesis, or as a result of ribosome stalling. Functionally, catalyzes the release of premature peptidyl moieties from peptidyl-tRNA molecules trapped in stalled 50S ribosomal subunits, and thus maintains levels of free tRNAs and 50S ribosomes. In Brucella abortus (strain 2308), this protein is Peptidyl-tRNA hydrolase.